We begin with the raw amino-acid sequence, 279 residues long: Cytochrome c1 (279 aa).

Residues 1-21 form the signal peptide; the sequence is MKKLLISAVSALVLGSGAAFA. Residues C55, C58, H59, and M204 each contribute to the heme c site. The chain crosses the membrane as a helical span at residues 248–266; that stretch reads MGLVAMVMLGLLSVMLYLT.

In terms of assembly, the main subunits of complex b-c1 are: cytochrome b, cytochrome c1 and the Rieske protein. In terms of processing, binds 1 heme c group covalently per subunit.

Its subcellular location is the cell membrane. Its function is as follows. Component of the ubiquinol-cytochrome c reductase complex (complex III or cytochrome b-c1 complex), which is a respiratory chain that generates an electrochemical potential coupled to ATP synthesis. c1 functions as an electron donor to cytochrome c. This is Cytochrome c1 (petC) from Rhodobacter capsulatus (strain ATCC BAA-309 / NBRC 16581 / SB1003).